The sequence spans 258 residues: Probable phthiotriol/phenolphthiotriol dimycocerosates methyltransferase 2 (258 aa).

This sequence belongs to the methyltransferase superfamily. Phthiotriol/phenolphthiotriol dimycocerosates methyltransferase family.

In terms of biological role, catalyzes the methylation of the lipid moiety of the intermediate compounds phthiotriol and glycosylated phenolphthiotriol dimycoserosates to form phthiocerol dimycocerosates (DIM A) and glycosylated phenolphthiocerol dimycocerosates (PGL). The sequence is that of Probable phthiotriol/phenolphthiotriol dimycocerosates methyltransferase 2 from Mycobacterium ulcerans (strain Agy99).